Here is a 423-residue protein sequence, read N- to C-terminus: Zinc-type alcohol dehydrogenase-like protein C1198.01 (423 aa).

The disordered stretch occupies residues 14–36; the sequence is KQLGHREVSEGSTQPKPDPSGAT. 6 residues coordinate Zn(2+): Cys-74, His-97, Cys-127, Cys-130, Cys-133, and Cys-141.

The protein belongs to the zinc-containing alcohol dehydrogenase family. Class-III subfamily. The cofactor is Zn(2+).

The protein localises to the golgi apparatus. The chain is Zinc-type alcohol dehydrogenase-like protein C1198.01 from Schizosaccharomyces pombe (strain 972 / ATCC 24843) (Fission yeast).